A 353-amino-acid chain; its full sequence is Cytochrome bc1 complex Rieske iron-sulfur subunit (353 aa).

A disordered region spans residues 1–51; the sequence is MSSQDIPEENLPAEQDRPHGAAARPADETNPFADPGLPPHEPRVQDVDERA. The segment covering 40–51 has biased composition (basic and acidic residues); sequence HEPRVQDVDERA. The next 3 membrane-spanning stretches (helical) occupy residues 60–80, 99–119, and 164–184; these read ALLFTLSMLATIAFIAAFVAI, FALGMTLGVALFAIGAGAVHW, and LIRNTMLGALTLVPLSGVVLL. A Rieske domain is found at 246-336; it reads KAALMIIRLE…IGVNDEGYLE (91 aa). Residues C279, H281, C298, and H301 each coordinate [2Fe-2S] cluster. Residues C284 and C300 are joined by a disulfide bond.

The protein belongs to the Rieske iron-sulfur protein family. In terms of assembly, the cytochrome bc1 complex is composed of a cytochrome b (QcrB), the Rieske iron-sulfur protein (QcrA) and a diheme cytochrome c (QcrC) subunit. [2Fe-2S] cluster is required as a cofactor.

The protein localises to the cell membrane. Its function is as follows. Iron-sulfur subunit of the cytochrome bc1 complex, an essential component of the respiratory electron transport chain required for ATP synthesis. The bc1 complex catalyzes the oxidation of menaquinol and the reduction of cytochrome c in the respiratory chain. The bc1 complex operates through a Q-cycle mechanism that couples electron transfer to generation of the proton gradient that drives ATP synthesis. In Streptomyces coelicolor (strain ATCC BAA-471 / A3(2) / M145), this protein is Cytochrome bc1 complex Rieske iron-sulfur subunit (qcrA).